Here is a 597-residue protein sequence, read N- to C-terminus: Putative heat shock protein HSP 90-beta-3 (597 aa).

Asn46, Asp88, and Lys107 together coordinate ATP. Positions 201–241 are disordered; the sequence is DKEISDDEAEEEKGEKEEEDKDDEEKPKIKDVGSDEEDDSK. A compositionally biased stretch (acidic residues) spans 204 to 223; that stretch reads ISDDEAEEEKGEKEEEDKDD. Positions 224-233 are enriched in basic and acidic residues; that stretch reads EEKPKIKDVG. Residue Arg334 participates in ATP binding. A coiled-coil region spans residues 414–446; it reads LELPEDEEEKKKMEESKEKFENLCKLMKEILDK. Acidic residues predominate over residues 564-578; sequence DEDEVAAEEPSDAVP. The tract at residues 564 to 597 is disordered; sequence DEDEVAAEEPSDAVPDEIPPLEGDEDASRMEEVD. The TPR repeat-binding motif lies at 593–597; the sequence is MEEVD.

Belongs to the heat shock protein 90 family. As to quaternary structure, homodimer.

Its subcellular location is the cytoplasm. Putative molecular chaperone that may promote the maturation, structural maintenance and proper regulation of specific target proteins. The sequence is that of Putative heat shock protein HSP 90-beta-3 (HSP90AB3P) from Homo sapiens (Human).